Reading from the N-terminus, the 217-residue chain is Large ribosomal subunit protein uL4 (217 aa).

A disordered region spans residues 46 to 102 (KRQGTHSAKTRAEVSGGGRKPFRQKGTGRARQGSIRAPHFTGGGISHGPKPRDYSQR).

It belongs to the universal ribosomal protein uL4 family. Part of the 50S ribosomal subunit.

Functionally, one of the primary rRNA binding proteins, this protein initially binds near the 5'-end of the 23S rRNA. It is important during the early stages of 50S assembly. It makes multiple contacts with different domains of the 23S rRNA in the assembled 50S subunit and ribosome. Its function is as follows. Forms part of the polypeptide exit tunnel. The protein is Large ribosomal subunit protein uL4 of Corynebacterium diphtheriae (strain ATCC 700971 / NCTC 13129 / Biotype gravis).